The sequence spans 29 residues: Cytochrome b6-f complex subunit 8 (29 aa).

Residues 3–23 (ILTLGWVGLLGLFTYSIAMVV) traverse the membrane as a helical segment.

This sequence belongs to the PetN family. The 4 large subunits of the cytochrome b6-f complex are cytochrome b6, subunit IV (17 kDa polypeptide, PetD), cytochrome f and the Rieske protein, while the 4 small subunits are PetG, PetL, PetM and PetN. The complex functions as a dimer.

The protein localises to the cellular thylakoid membrane. Component of the cytochrome b6-f complex, which mediates electron transfer between photosystem II (PSII) and photosystem I (PSI), cyclic electron flow around PSI, and state transitions. This is Cytochrome b6-f complex subunit 8 from Cyanothece sp. (strain PCC 7425 / ATCC 29141).